Here is a 122-residue protein sequence, read N- to C-terminus: Large ribosomal subunit protein uL14 (122 aa).

It belongs to the universal ribosomal protein uL14 family. Part of the 50S ribosomal subunit. Forms a cluster with proteins L3 and L19. In the 70S ribosome, L14 and L19 interact and together make contacts with the 16S rRNA in bridges B5 and B8.

Its function is as follows. Binds to 23S rRNA. Forms part of two intersubunit bridges in the 70S ribosome. The sequence is that of Large ribosomal subunit protein uL14 from Gemmatimonas aurantiaca (strain DSM 14586 / JCM 11422 / NBRC 100505 / T-27).